A 141-amino-acid polypeptide reads, in one-letter code: Putative pre-16S rRNA nuclease (141 aa).

Belongs to the YqgF nuclease family.

Its subcellular location is the cytoplasm. Its function is as follows. Could be a nuclease involved in processing of the 5'-end of pre-16S rRNA. The polypeptide is Putative pre-16S rRNA nuclease (Desulforudis audaxviator (strain MP104C)).